Consider the following 262-residue polypeptide: Probable esterase azaC (262 aa).

Active-site charge relay system residues include Ser-119, Asp-188, and His-216.

It belongs to the LovG family.

The protein operates within secondary metabolite biosynthesis. Probable esterase; part of the gene cluster that mediates the biosynthesis of azaphilones, a class of fungal metabolites characterized by a highly oxygenated pyrano-quinone bicyclic core and exhibiting a broad range of bioactivities. In the first step, the non-reducing polyketide synthase azaA forms the hexaketide precursor from successive condensations of five malonyl-CoA units, presumably with a simple acetyl-CoA starter unit. The reactive polyketide chain then undergoes a PT-mediated C2-C7 cyclization to afford the aromatic ring and is eventually released as an aldehyde through the R-domain. The putative ketoreductase azaE is proposed to catalyze the reduction of the terminal ketone resulting in the early culture product FK17-P2a. The monooxygenase azaH was demonstrated to be the only enzyme required to convert FK17-P2a to azanigerone E. AzaH first hydroxylates the benzaldehyde intermediate FK17-P2a at C4, which triggers the formation of the pyran-ring to afford azanigerone E. In parallel, the 2,4-dimethylhexanoyl chain is synthesized by the HR-PKS azaB and is proposed to be transferred to the C4-hydroxyl of azanigerone E by the acyltransferase azaD directly from the ACP domain of azaB. Alternatively, the 2,4-dimethyl-hexanoyl chain may be offloaded from the HR-PKS as a carboxylic acid and converted to an acyl-CoA by azaF. The resulting acyl-CoA molecule could then be taken up as a substrate by AzaD to form azanigerone B. To yield the carboxylic acid substituent in azanigerone A, the hydroxypropyl side chain of azanigerone B would need to undergo a C-C oxidative cleavage catalyzed by cytochrome P450 AzaI. AzaI is proposed to act on a vicinal diol that leads to a C-C bond scission either through an alkoxyradical intermediate or a peroxy complex. In the biosynthesis of azanigerone A, azanigerone B first undergoes hydroxylation at C10, possibly catalyzed by one of the two FAD-dependent monooxygenases encoded in the cluster, azaG or azaL, resulting in the vicinal diol azanigerone C. Oxidative cleavage of azanigerone C by azaI would yield the corresponding aldehyde derivative of azanigerone A. Finally, the dehydrogenase azaJ is proposed to convert the aldehyde functional group into the carboxylic acid, completing the conversion from azanigerone B to azanigerone A. Alternatively, the oxidation of aldehyde to carboxylic acid may be catalyzed by the same P450 enzyme azaI via consecutive oxidation or by endogenous alcohol dehydrogenase. The chain is Probable esterase azaC from Aspergillus niger (strain ATCC 1015 / CBS 113.46 / FGSC A1144 / LSHB Ac4 / NCTC 3858a / NRRL 328 / USDA 3528.7).